The primary structure comprises 232 residues: Ubiquitin carboxyl-terminal hydrolase UCHL3 (232 aa).

In terms of domain architecture, UCH catalytic spans 6–225 (IWTPLESNPD…LRFSALAVIP (220 aa)). An interaction with ubiquitin region spans residues 10-14 (LESNP). Residue Cys-92 is the Nucleophile of the active site. The tract at residues 151–159 (QVENRDDIL) is crossover loop which restricts access of large ubiquitin adducts to the active site. The segment at 163–165 (THF) is interaction with ubiquitin. His-164 functions as the Proton donor in the catalytic mechanism.

It belongs to the peptidase C12 family.

The enzyme catalyses Thiol-dependent hydrolysis of ester, thioester, amide, peptide and isopeptide bonds formed by the C-terminal Gly of ubiquitin (a 76-residue protein attached to proteins as an intracellular targeting signal).. In terms of biological role, thiol protease that recognizes and hydrolyzes a peptide bond at the C-terminal glycine of either ubiquitin or NEDD8. Essential for parasite blood stage survival. The polypeptide is Ubiquitin carboxyl-terminal hydrolase UCHL3 (Plasmodium falciparum (isolate 3D7)).